The following is a 303-amino-acid chain: Mycothiol acetyltransferase (303 aa).

2 N-acetyltransferase domains span residues 3 to 152 (VTVT…VSLP) and 155 to 303 (VRIR…MYRS). Aspartate 35 provides a ligand contact to 1D-myo-inositol 2-(L-cysteinylamino)-2-deoxy-alpha-D-glucopyranoside. 79-81 (LTV) serves as a coordination point for acetyl-CoA. 3 residues coordinate 1D-myo-inositol 2-(L-cysteinylamino)-2-deoxy-alpha-D-glucopyranoside: glutamate 182, lysine 224, and glutamate 237. Acetyl-CoA is bound by residues 241 to 243 (VGV) and 248 to 254 (QGSGLGR). 1D-myo-inositol 2-(L-cysteinylamino)-2-deoxy-alpha-D-glucopyranoside is bound at residue tyrosine 275.

Belongs to the acetyltransferase family. MshD subfamily. In terms of assembly, monomer.

It catalyses the reaction 1D-myo-inositol 2-(L-cysteinylamino)-2-deoxy-alpha-D-glucopyranoside + acetyl-CoA = mycothiol + CoA + H(+). Catalyzes the transfer of acetyl from acetyl-CoA to desacetylmycothiol (Cys-GlcN-Ins) to form mycothiol. The sequence is that of Mycothiol acetyltransferase from Kocuria rhizophila (strain ATCC 9341 / DSM 348 / NBRC 103217 / DC2201).